Consider the following 435-residue polypeptide: MVYFPKIEKIKYEGTNTKNMYAFRHYNSEEIIMGKTMKEHLRFAVAYWHTMTQDGSDPFGKAVNKRSWLGESPMETAKKRVIAFFEILEKLDVEYFCFHDIDIAPEGNSLKEFFSNIDEITDLIKEKMDETGIKLLWNTANMFSNPRYVNGAASTNNANVYAIAAAQVKKGLDVSKKLGGENYVFWGGREGYETLLNTDMKFEQDNIARLFKMAIFYGEKIGHKPQFLIEPKPKEPSKHQYDFDAATTMAFILKYGLEKDFKLNLEANHATLAGHTFEHELNVARNYGALGSIDANQGDVLLGWDTDEFPTNVYDVTLAMYEILENGGIEPGGINFDSKVRRSSFEMEDLLLAHIAGMDTFARGLKSAMKLKEDRFFEDLKEQRYSSFKKGIGAKIISGKENLESLTNYALKNDEPIIESSHIEYVKNILNDYLY.

Residues histidine 99 and aspartate 102 contribute to the active site. The Mg(2+) site is built by glutamate 230, glutamate 266, histidine 269, aspartate 294, aspartate 305, aspartate 307, and aspartate 337.

This sequence belongs to the xylose isomerase family. In terms of assembly, homotetramer. It depends on Mg(2+) as a cofactor.

The protein localises to the cytoplasm. It carries out the reaction alpha-D-xylose = alpha-D-xylulofuranose. The sequence is that of Xylose isomerase from Enterococcus faecalis (strain ATCC 700802 / V583).